Here is a 686-residue protein sequence, read N- to C-terminus: ATP-dependent zinc metalloprotease FTSH 6, chloroplastic (686 aa).

Residues 1-14 show a composition bias toward polar residues; that stretch reads MSPTAMSLTTTTSR. The tract at residues 1–52 is disordered; the sequence is MSPTAMSLTTTTSRLPICRAQGGGVAKEKRTTPPPAKITPPSSSSSEAAGLS. The N-terminal 75 residues, 1-75, are a transit peptide targeting the chloroplast; that stretch reads MSPTAMSLTT…LGLTAARPAR (75 aa). Residues 39 to 52 are compositionally biased toward low complexity; it reads TPPSSSSSEAAGLS. The chain crosses the membrane as a helical span at residues 164 to 184; that stretch reads VMLLDLLVNFGFPLLFVASLL. 261 to 268 contacts ATP; it reads GPPGTGKT. His-483 provides a ligand contact to Zn(2+). The active site involves Glu-484. His-487 and Asp-562 together coordinate Zn(2+).

It in the N-terminal section; belongs to the AAA ATPase family. In the C-terminal section; belongs to the peptidase M41 family. Zn(2+) is required as a cofactor.

Its subcellular location is the plastid. It is found in the chloroplast thylakoid membrane. In terms of biological role, probable ATP-dependent zinc metallopeptidase. This chain is ATP-dependent zinc metalloprotease FTSH 6, chloroplastic (FTSH6), found in Oryza sativa subsp. japonica (Rice).